Consider the following 449-residue polypeptide: Tubulin alpha-1C chain (449 aa).

Residues 1 to 4 (MREC) carry the MREC motif motif. A GTP-binding site is contributed by Gln-11. Lys-40 bears the N6-acetyllysine mark. Positions 71, 140, 144, 145, 179, 206, and 228 each coordinate GTP. Glu-71 serves as a coordination point for Mg(2+). The active site involves Glu-254. Tyr-282 carries the post-translational modification 3'-nitrotyrosine. A disordered region spans residues 429–449 (EKDYEEVGADSADGEDEGEEY). Over residues 431–449 (DYEEVGADSADGEDEGEEY) the composition is skewed to acidic residues. Residue Tyr-432 is modified to Phosphotyrosine. Ser-439 bears the Phosphoserine mark. Tyr-449 carries the post-translational modification 3'-nitrotyrosine.

Belongs to the tubulin family. Dimer of alpha and beta chains. A typical microtubule is a hollow water-filled tube with an outer diameter of 25 nm and an inner diameter of 15 nM. Alpha-beta heterodimers associate head-to-tail to form protofilaments running lengthwise along the microtubule wall with the beta-tubulin subunit facing the microtubule plus end conferring a structural polarity. Microtubules usually have 13 protofilaments but different protofilament numbers can be found in some organisms and specialized cells. Mg(2+) serves as cofactor. In terms of processing, some glutamate residues at the C-terminus are polyglutamylated, resulting in polyglutamate chains on the gamma-carboxyl group. Polyglutamylation plays a key role in microtubule severing by spastin (SPAST). SPAST preferentially recognizes and acts on microtubules decorated with short polyglutamate tails: severing activity by SPAST increases as the number of glutamates per tubulin rises from one to eight, but decreases beyond this glutamylation threshold. Glutamylation is also involved in cilia motility. Some glutamate residues at the C-terminus are monoglycylated but not polyglycylated due to the absence of functional TTLL10 in human. Monoglycylation is mainly limited to tubulin incorporated into cilia and flagella axonemes, which is required for their stability and maintenance. Flagella glycylation controls sperm motility. Both polyglutamylation and monoglycylation can coexist on the same protein on adjacent residues, and lowering glycylation levels increases polyglutamylation, and reciprocally. Post-translationally, acetylation of alpha chains at Lys-40 is located inside the microtubule lumen. This modification has been correlated with increased microtubule stability, intracellular transport and ciliary assembly. In terms of processing, methylation of alpha chains at Lys-40 is found in mitotic microtubules and is required for normal mitosis and cytokinesis contributing to genomic stability. Nitration of Tyr-449 is irreversible and interferes with normal dynein intracellular distribution. Post-translationally, undergoes a tyrosination/detyrosination cycle, the cyclic removal and re-addition of a C-terminal tyrosine residue by the enzymes tubulin tyrosine carboxypeptidase (MATCAP1/KIAA0895L, VASH1 or VASH2) and tubulin tyrosine ligase (TTL), respectively. In terms of processing, tyrosination promotes microtubule interaction with CAP-Gly domain-containing proteins such as CLIP1, CLIP2 and DCTN1. Tyrosination regulates the initiation of dynein-dynactin motility via interaction with DCTN1, which brings the dynein-dynactin complex into contact with microtubules. In neurons, tyrosinated tubulins mediate the initiation of retrograde vesicle transport. Detyrosination is involved in metaphase plate congression by guiding chromosomes during mitosis: detyrosination promotes interaction with CENPE, promoting pole-proximal transport of chromosomes toward the equator. Detyrosination increases microtubules-dependent mechanotransduction in dystrophic cardiac and skeletal muscle. In cardiomyocytes, detyrosinated microtubules are required to resist to contractile compression during contraction: detyrosination promotes association with desmin (DES) at force-generating sarcomeres, leading to buckled microtubules and mechanical resistance to contraction.

Its subcellular location is the cytoplasm. It localises to the cytoskeleton. It catalyses the reaction GTP + H2O = GDP + phosphate + H(+). In terms of biological role, tubulin is the major constituent of microtubules, a cylinder consisting of laterally associated linear protofilaments composed of alpha- and beta-tubulin heterodimers. Microtubules grow by the addition of GTP-tubulin dimers to the microtubule end, where a stabilizing cap forms. Below the cap, tubulin dimers are in GDP-bound state, owing to GTPase activity of alpha-tubulin. The sequence is that of Tubulin alpha-1C chain (TUBA1C) from Homo sapiens (Human).